The following is a 198-amino-acid chain: Superoxide dismutase [Fe] (198 aa).

Fe cation is bound by residues H27, H74, D158, and H162.

The protein belongs to the iron/manganese superoxide dismutase family. Homodimer. It depends on Fe cation as a cofactor.

The protein resides in the cytoplasm. It catalyses the reaction 2 superoxide + 2 H(+) = H2O2 + O2. Its function is as follows. Destroys superoxide anion radicals which are normally produced within the cells and which are toxic to biological systems. The sequence is that of Superoxide dismutase [Fe] (SODB) from Plasmodium malariae.